The chain runs to 156 residues: Small ribosomal subunit protein uS7 (156 aa).

It belongs to the universal ribosomal protein uS7 family. Part of the 30S ribosomal subunit. Contacts proteins S9 and S11.

Functionally, one of the primary rRNA binding proteins, it binds directly to 16S rRNA where it nucleates assembly of the head domain of the 30S subunit. Is located at the subunit interface close to the decoding center, probably blocks exit of the E-site tRNA. This chain is Small ribosomal subunit protein uS7, found in Syntrophomonas wolfei subsp. wolfei (strain DSM 2245B / Goettingen).